The sequence spans 301 residues: MSEDEEKVKLRRLEPAIQKFTKIVIPTDLERLKKHQINIEKYQRCRIWDKLHEEHINAGRTVQQLRSNIREMEKLCLKVHKDDLILLKRMIDPMKEAAAAATAEFLQLHLESVEELKKQVKNEEALLQPSLTRSTTIDGVHTGEAEAASQSLTQIYALPEIPRDQNAAESWETLEADLIELSHLVTDMSLLVNSQQEKIDSIADHVNSAAVNVEEGTKNLQKAAKYKLAALPVAGAVIGGVVGGPIGLLAGFKVAGIAAALGGGVLGFTGGKLIQRRKQKMMEKLTSSCPDLPSQSDKKCS.

At S2 the chain carries N-acetylserine. Over 2-227 the chain is Cytoplasmic; sequence SEDEEKVKLR…KNLQKAAKYK (226 aa). K41 is modified (N6-acetyllysine). Positions 49–128 form a coiled coil; it reads DKLHEEHINA…QVKNEEALLQ (80 aa). Y156 carries the phosphotyrosine; by ABL1 modification. The t-SNARE coiled-coil homology domain occupies 161-223; that stretch reads IPRDQNAAES…EEGTKNLQKA (63 aa). The helical transmembrane segment at 228 to 248 threads the bilayer; it reads LAALPVAGAVIGGVVGGPIGL. The tract at residues 228 to 274 is necessary and sufficient for localization to autophagosome; sequence LAALPVAGAVIGGVVGGPIGLLAGFKVAGIAAALGGGVLGFTGGKLI. Over 249-253 the chain is Lumenal; the sequence is LAGFK. Residues 254 to 274 traverse the membrane as a helical segment; that stretch reads VAGIAAALGGGVLGFTGGKLI. The interval 273-301 is required for interaction with COPB1, TMED9 and TMED10; sequence LIQRRKQKMMEKLTSSCPDLPSQSDKKCS. The Cytoplasmic portion of the chain corresponds to 275–301; it reads QRRKQKMMEKLTSSCPDLPSQSDKKCS. Position 288 is a phosphoserine (S288). The Endoplasmic reticulum retention signal motif lies at 298 to 301; sequence KKCS.

This sequence belongs to the syntaxin family. Forms a SNARE complex composed of VAMP8, SNAP29 and STX17 involved in fusion of autophagosome with lysosome. May interact with VAMP7. May interact with VTI1B. Probably interacts with BET1, SCFD1 and SEC22B. Interacts with PTPN2 and ABL1; involved in STX17 phosphorylation. Interacts with COPB1. Interacts with TMED9 and TMED10; the interaction is direct. Interacts with RUBCNL/PACER; promoting targeting of RUBCNL/PACER to autophagosome. Interacts with VAMP8, SNAP29, VPS39 and VPS41; these interactions are increased in the absence of TMEM39A. Interacts with IRGM; promoting STX17 recruitment to autophagosomes. Interacts with ATG8 proteins GABARAP and MAP1LC3B. Interacts with RNF115; this interaction enhances STX17 stability which in turn promotes autophagosome maturation. Interacts with RAB39A (GTP-bound); the interaction promotes autophagosome-lysosome membrane fusion driven by STX17-SNAP29-VAMP8. Interacts with RAB39B; the interaction may promote a different fonction in autophagy as compared with RAB39A. Post-translationally, phosphorylated at Tyr-156 probably by ABL1. Dephosphorylation by PTPN2; regulates exit from the endoplasmic reticulum. Detected in all tissues examined with higher expression in steroidogenic tissues including testis and adrenal gland (at protein level). Highly expressed in liver and testis. Also found in brain, heart, kidney, lung, placenta, skeletal muscle and spleen.

The protein localises to the endoplasmic reticulum membrane. It is found in the smooth endoplasmic reticulum membrane. Its subcellular location is the endoplasmic reticulum-Golgi intermediate compartment membrane. The protein resides in the cytoplasmic vesicle. It localises to the autophagosome membrane. The protein localises to the COPII-coated vesicle membrane. It is found in the cytoplasm. Its subcellular location is the cytosol. The protein resides in the mitochondrion membrane. It localises to the autolysosome membrane. SNAREs, soluble N-ethylmaleimide-sensitive factor-attachment protein receptors, are essential proteins for fusion of cellular membranes. SNAREs localized on opposing membranes assemble to form a trans-SNARE complex, an extended, parallel four alpha-helical bundle that drives membrane fusion. STX17 is a SNARE of the autophagosome involved in autophagy through the direct control of autophagosome membrane fusion with the lysosome membrane. May also play a role in the early secretory pathway where it may maintain the architecture of the endoplasmic reticulum-Golgi intermediate compartment/ERGIC and Golgi and/or regulate transport between the endoplasmic reticulum, the ERGIC and the Golgi. The polypeptide is Syntaxin-17 (Rattus norvegicus (Rat)).